A 160-amino-acid chain; its full sequence is Ribosomal RNA large subunit methyltransferase H (160 aa).

L76 and G108 together coordinate S-adenosyl-L-methionine.

It belongs to the RNA methyltransferase RlmH family. In terms of assembly, homodimer.

It is found in the cytoplasm. The catalysed reaction is pseudouridine(1915) in 23S rRNA + S-adenosyl-L-methionine = N(3)-methylpseudouridine(1915) in 23S rRNA + S-adenosyl-L-homocysteine + H(+). Functionally, specifically methylates the pseudouridine at position 1915 (m3Psi1915) in 23S rRNA. The polypeptide is Ribosomal RNA large subunit methyltransferase H (Rhodopseudomonas palustris (strain BisB18)).